Here is a 497-residue protein sequence, read N- to C-terminus: Serine/threonine-protein phosphatase 2A 56 kDa regulatory subunit beta isoform (497 aa).

The span at 1 to 19 shows a compositional bias: low complexity; that stretch reads METKLPPASTPTSPSSPGL. 2 disordered regions span residues 1–55 and 473–497; these read METK…YQSN and QGTQGAKEAPVPRPTPQVAASGGQS. Residues serine 32, serine 35, serine 44, serine 46, serine 47, and serine 48 each carry the phosphoserine modification. The segment covering 34–45 has biased composition (basic residues); that stretch reads RSLRRARPRRSH.

Belongs to the phosphatase 2A regulatory subunit B56 family. As to quaternary structure, component of the serine/threonine-protein phosphatase 2A complex (PP2A). This complex consists of a common heterodimeric core enzyme, composed of a 36 kDa catalytic subunit (subunit C) and a 65 kDa constant scaffold subunit (PR65 or subunit A), that associates with a variety of regulatory subunits. Proteins that associate with the core dimer include three families of regulatory subunits B (the R2/B/PR55/B55, R3/B''/PR72/PR130/PR59 and R5/B'/B56 families), the 48 kDa variable regulatory subunit, viral proteins, and cell signaling molecules. Interacts with SGO1. Interacts with AKT1. In terms of processing, ubiquitinated by CUL3-KLHL15 complex; this modification leads to proteasomal degradation. As to expression, widely expressed at the mRNA level, with highest levels in cerebellum and lung.

The protein resides in the cytoplasm. Its function is as follows. As the regulatory component of the serine/threonine-protein phosphatase 2A (PP2A) holoenzyme, modulates substrate specificity, subcellular localization, and responsiveness to phosphorylation. The phosphorylated form mediates the interaction between PP2A and AKT1, leading to AKT1 dephosphorylation. This Rattus norvegicus (Rat) protein is Serine/threonine-protein phosphatase 2A 56 kDa regulatory subunit beta isoform (Ppp2r5b).